Here is a 571-residue protein sequence, read N- to C-terminus: Proline--tRNA ligase (571 aa).

The protein belongs to the class-II aminoacyl-tRNA synthetase family. ProS type 1 subfamily. Homodimer.

The protein localises to the cytoplasm. The enzyme catalyses tRNA(Pro) + L-proline + ATP = L-prolyl-tRNA(Pro) + AMP + diphosphate. Catalyzes the attachment of proline to tRNA(Pro) in a two-step reaction: proline is first activated by ATP to form Pro-AMP and then transferred to the acceptor end of tRNA(Pro). As ProRS can inadvertently accommodate and process non-cognate amino acids such as alanine and cysteine, to avoid such errors it has two additional distinct editing activities against alanine. One activity is designated as 'pretransfer' editing and involves the tRNA(Pro)-independent hydrolysis of activated Ala-AMP. The other activity is designated 'posttransfer' editing and involves deacylation of mischarged Ala-tRNA(Pro). The misacylated Cys-tRNA(Pro) is not edited by ProRS. The protein is Proline--tRNA ligase of Vibrio cholerae serotype O1 (strain ATCC 39541 / Classical Ogawa 395 / O395).